The primary structure comprises 209 residues: Uracil phosphoribosyltransferase (209 aa).

Residues R79, R104, and 131–139 each bind 5-phospho-alpha-D-ribose 1-diphosphate; that span reads DPMLATGGS. Residues I194 and 199-201 each bind uracil; that span reads GDA. D200 serves as a coordination point for 5-phospho-alpha-D-ribose 1-diphosphate.

The protein belongs to the UPRTase family. Requires Mg(2+) as cofactor.

It catalyses the reaction UMP + diphosphate = 5-phospho-alpha-D-ribose 1-diphosphate + uracil. The protein operates within pyrimidine metabolism; UMP biosynthesis via salvage pathway; UMP from uracil: step 1/1. Allosterically activated by GTP. In terms of biological role, catalyzes the conversion of uracil and 5-phospho-alpha-D-ribose 1-diphosphate (PRPP) to UMP and diphosphate. The polypeptide is Uracil phosphoribosyltransferase (Lactiplantibacillus plantarum (strain ATCC BAA-793 / NCIMB 8826 / WCFS1) (Lactobacillus plantarum)).